The primary structure comprises 205 residues: Ras-related protein rab-6.2 (205 aa).

Residues 18 to 25 (EQSVGKTS), Thr42, 66 to 70 (TAGQE), and 124 to 127 (KTDL) contribute to the GTP site. S-geranylgeranyl cysteine attachment occurs at residues Cys203 and Cys205. Cys205 bears the Cysteine methyl ester mark.

The protein belongs to the small GTPase superfamily. Rab family. As to quaternary structure, interacts with GARP complex component vps-52. Interacts (in GTP-bound form) with lin-10. May interact (in GTP-bound form) with eat-17. In terms of tissue distribution, highly expressed in body wall muscles, pharyngeal and vulval muscles, hypodermis, intestine, the gonad, coelomocytes, and neurons, including command interneuron (at protein level). Highly expressed in the terminal bulb muscles.

It localises to the perikaryon. The protein localises to the cell projection. Its subcellular location is the dendrite. The protein resides in the golgi apparatus. It is found in the cytoplasmic vesicle. Its function is as follows. The small GTPases Rab are key regulators of intracellular membrane trafficking, from the formation of transport vesicles to their fusion with membranes. Rabs cycle between an inactive GDP-bound form and an active GTP-bound form that is able to recruit to membranes different set of downstream effectors directly responsible for vesicle formation, movement, tethering and fusion. In its active GTP-bound form, acts redundantly with rab-6.1 (in its active GTP-bound form) to positively regulate the retrograde trafficking of cargo molecules from endosomes to the Golgi compartment. Required for the retrograde trafficking of glr-1, a subunit of AMPA-type glutamate receptors (AMPRs), out of early endosomes and into the Golgi compartment in neurons. Its role in glr-1 trafficking may partly be mediated by its interaction with lin-10 and association with components of the retromer complex such as rme-8. Together with rab-6.2, promotes the retrograde trafficking of mig-14 from endosomes to Golgi structures in the intestine. Plays a role in the epidermis to promote cuticle integrity and impermeability of the cuticle barrier to exogenous molecules. May have a role in the glycosylation of the cuticular surface. Required for seam cell division and alae formation. Required for grinder formation, which is the feeding organ that breaks down food. In contrast to rab-6.1, may play a minor role in the exocytosis of secretory vesicles (cortical granules) during the oocyte-to-embryo transition. The sequence is that of Ras-related protein rab-6.2 from Caenorhabditis elegans.